We begin with the raw amino-acid sequence, 529 residues long: Serine/threonine-protein kinase RIO2 (529 aa).

The Protein kinase domain occupies 97 to 273; sequence VGNQIGIGKE…RDVTCVRTFF (177 aa). Lys123 provides a ligand contact to ATP. Residue Asp228 is the Proton acceptor of the active site. Disordered regions lie at residues 331–366 and 411–452; these read RNRQ…KDHE and EGYK…GHVA. Acidic residues predominate over residues 337–346; it reads DLGEDEDDSD. Over residues 411-428 the composition is skewed to basic and acidic residues; sequence EGYKDIELPPEDFKRPAD. A compositionally biased stretch (acidic residues) spans 429–447; the sequence is SENDDENDEDEEEGEEEDA.

It belongs to the protein kinase superfamily. RIO-type Ser/Thr kinase family. The cofactor is Mg(2+). Expressed in pharynx (metacorpus and posterior bulbus). Expression is restricted to adult stage.

The enzyme catalyses L-seryl-[protein] + ATP = O-phospho-L-seryl-[protein] + ADP + H(+). It carries out the reaction L-threonyl-[protein] + ATP = O-phospho-L-threonyl-[protein] + ADP + H(+). Its function is as follows. Required for larval development. The polypeptide is Serine/threonine-protein kinase RIO2 (Caenorhabditis elegans).